Here is a 199-residue protein sequence, read N- to C-terminus: Putative AgrB-like protein (199 aa).

5 helical membrane passes run 43 to 63 (IIIF…FSFI), 81 to 101 (YGCL…TRLF), 108 to 128 (FYIV…PCPN), 139 to 159 (LKIL…LSPL), and 165 to 185 (ILIS…KGVI).

It belongs to the AgrB family.

The protein resides in the cell membrane. Functionally, may be involved in the proteolytic processing of a quorum sensing system signal molecule precursor. This Clostridium beijerinckii (Clostridium MP) protein is Putative AgrB-like protein (cfg02).